The chain runs to 83 residues: Large ribosomal subunit protein eL31 (83 aa).

Belongs to the eukaryotic ribosomal protein eL31 family.

This Methanococcus aeolicus (strain ATCC BAA-1280 / DSM 17508 / OCM 812 / Nankai-3) protein is Large ribosomal subunit protein eL31.